The chain runs to 1020 residues: Calcium-transporting ATPase 1 (1020 aa).

Met1 carries the N-acetylmethionine modification. Topologically, residues 1-162 (MESYLNENFG…NQFTESPSRG (162 aa)) are stromal. The tract at residues 21 to 32 (ALQRWRKLCWIV) is interaction with calmodulin. Phosphoserine; by CPK is present on Ser46. Residues 163–183 (FWLFVWEALQDTTLMILAACA) traverse the membrane as a helical segment. Residues 184–201 (FVSLIVGILMEGWPIGAH) are Lumenal-facing. A helical transmembrane segment spans residues 202–222 (DGLGIVASILLVVFVTATSDY). Residues 223–350 (RQSLQFKDLD…DDETPLQVKL (128 aa)) are Stromal-facing. Residues 351-370 (NGVATIIGKIGLFFAVITFA) form a helical membrane-spanning segment. At 371 to 400 (VLVQGLANQKRLDNSHWIWTADELMAMLEY) the chain is on the lumenal side. A helical membrane pass occupies residues 401–418 (FAVAVTIVVVAVPEGLPL). The Stromal portion of the chain corresponds to 419–813 (AVTLSLAFAM…KWGRSVYINI (395 aa)). Asp456 (4-aspartylphosphate intermediate) is an active-site residue. Residues Asp758 and Asp762 each contribute to the Mg(2+) site. A helical membrane pass occupies residues 814-832 (QKFVQFQLTVNVVALIVNF). The Lumenal segment spans residues 833 to 843 (LSACLTGNAPL). Residues 844–864 (TAVQLLWVNMIMDTLGALALA) form a helical membrane-spanning segment. The Stromal segment spans residues 865 to 884 (TEPPQDDLMKRSPVGRKGNF). A helical membrane pass occupies residues 885–907 (ISNVMWRNILGQSLYQLVIIWCL). Topologically, residues 908–919 (QTKGKTMFGLDG) are lumenal. Residues 920-941 (PDSDLTLNTLIFNIFVFCQVFN) form a helical membrane-spanning segment. Topologically, residues 942–959 (EISSREMEKIDVFKGILK) are stromal. The chain crosses the membrane as a helical span at residues 960-981 (NYVFVAVLTCTVVFQVIIIELL). Residues 982 to 991 (GTFADTTPLN) lie on the Lumenal side of the membrane. A helical membrane pass occupies residues 992–1013 (LGQWLVSIILGFLGMPVAAALK). The Stromal portion of the chain corresponds to 1014 to 1020 (MIPVGSH).

It belongs to the cation transport ATPase (P-type) (TC 3.A.3) family. Type IIB subfamily. As to expression, expressed at higher levels in roots than in leaves.

The protein localises to the plastid. It localises to the chloroplast inner membrane. The enzyme catalyses Ca(2+)(in) + ATP + H2O = Ca(2+)(out) + ADP + phosphate + H(+). With respect to regulation, activated by calmodulin. In terms of biological role, this magnesium-dependent enzyme catalyzes the hydrolysis of ATP coupled with the translocation of calcium from the cytosol out of the cell or into organelles. The protein is Calcium-transporting ATPase 1 (ACA1) of Arabidopsis thaliana (Mouse-ear cress).